A 196-amino-acid chain; its full sequence is MSIEVFNESGYDGVNEEMLIDVLSFALGEMDIHPDAEASIHIVDVDTIADLHVKWLDLEGPTDVMSFPMDELTPGYSRPDGATPGPAMLGDIVLCPEFAAKQATKAGHDLAHELALLTVHGSLHLLGYDHVDPAEEREMFALQNELLADWYDNVEARGVTYQPKPSGAGAFPTAADRLELDEKMEADDSGFGGVES.

Zn(2+)-binding residues include histidine 120, histidine 124, and histidine 130.

This sequence belongs to the endoribonuclease YbeY family. It depends on Zn(2+) as a cofactor.

The protein localises to the cytoplasm. Single strand-specific metallo-endoribonuclease involved in late-stage 70S ribosome quality control and in maturation of the 3' terminus of the 16S rRNA. This is Endoribonuclease YbeY from Corynebacterium glutamicum (strain ATCC 13032 / DSM 20300 / JCM 1318 / BCRC 11384 / CCUG 27702 / LMG 3730 / NBRC 12168 / NCIMB 10025 / NRRL B-2784 / 534).